We begin with the raw amino-acid sequence, 353 residues long: Anthranilate phosphoribosyltransferase (353 aa).

5-phospho-alpha-D-ribose 1-diphosphate contacts are provided by residues Gly79, 82–83, Thr87, 89–92, 107–115, and Ser119; these read GD, NIST, and KHGNHSFTS. Gly79 is an anthranilate binding site. Ser91 is a binding site for Mg(2+). Residue Asn110 coordinates anthranilate. Arg165 contacts anthranilate. 2 residues coordinate Mg(2+): Asp223 and Glu224.

The protein belongs to the anthranilate phosphoribosyltransferase family. In terms of assembly, homodimer. Requires Mg(2+) as cofactor.

The enzyme catalyses N-(5-phospho-beta-D-ribosyl)anthranilate + diphosphate = 5-phospho-alpha-D-ribose 1-diphosphate + anthranilate. It participates in amino-acid biosynthesis; L-tryptophan biosynthesis; L-tryptophan from chorismate: step 2/5. Its function is as follows. Catalyzes the transfer of the phosphoribosyl group of 5-phosphorylribose-1-pyrophosphate (PRPP) to anthranilate to yield N-(5'-phosphoribosyl)-anthranilate (PRA). In Methanococcoides burtonii (strain DSM 6242 / NBRC 107633 / OCM 468 / ACE-M), this protein is Anthranilate phosphoribosyltransferase.